A 74-amino-acid chain; its full sequence is Conotoxin SIIID (74 aa).

Positions 1-20 (MMSKLGVLLTVCLLLFPLTA) are cleaved as a signal peptide. Positions 21-53 (LPLDGDQPADQLEDRMQDDISSEQYPSFVRRQK) are excised as a propeptide. 3 disulfide bridges follow: Cys-54-Cys-71, Cys-55-Cys-73, and Cys-61-Cys-74.

It belongs to the conotoxin M superfamily. Post-translationally, three disulfide isomers have been synthesized and tested. SIIID with the disulfide pairing 1-4;2-5;3-6 is the most active. In terms of tissue distribution, expressed by the venom duct.

It is found in the secreted. The short synthetic peptide SIIID (range 54-74, with disulfide pairing 1-4, 2-5 and 3-6) reversibly inhibits human alpha-7/CHRNA7 acetylcholine receptor (IC(50)=880 nM). Shows a paralytic effect in fish. In Conus striatus (Striated cone), this protein is Conotoxin SIIID.